The chain runs to 146 residues: Anti-sigma F factor (146 aa).

It belongs to the anti-sigma-factor family.

It catalyses the reaction L-seryl-[protein] + ATP = O-phospho-L-seryl-[protein] + ADP + H(+). The catalysed reaction is L-threonyl-[protein] + ATP = O-phospho-L-threonyl-[protein] + ADP + H(+). Binds to sigma F and blocks its ability to form an RNA polymerase holoenzyme (E-sigma F). Phosphorylates SpoIIAA on a serine residue. This phosphorylation may enable SpoIIAA to act as an anti-anti-sigma factor that counteracts SpoIIAB and thus releases sigma F from inhibition. The sequence is that of Anti-sigma F factor from Lysinibacillus sphaericus (Bacillus sphaericus).